The following is a 295-amino-acid chain: Maintenance of mitochondrial morphology protein 1 (295 aa).

The Lumenal segment spans residues 1 to 12 (MVQLFHLTFTQG). Residues 13-33 (FFIGQLSVIVIVYIFLRFFLF) traverse the membrane as a helical segment. Residues 34-295 (CTKEELKNVQ…REGHRQKSTE (262 aa)) are Cytoplasmic-facing. The 198-residue stretch at 81–278 (EEESLDWFNV…SPQFQQISIP (198 aa)) folds into the SMP-LTD domain.

It belongs to the MMM1 family. As to quaternary structure, homodimer. Component of the ER-mitochondria encounter structure (ERMES) or MDM complex, composed of mmm1, mdm10, mdm12 and mdm34. A mmm1 homodimer associates with one molecule of mdm12 on each side in a pairwise head-to-tail manner, and the SMP-LTD domains of mmm1 and mdm12 generate a continuous hydrophobic tunnel for phospholipid trafficking.

The protein resides in the endoplasmic reticulum membrane. Component of the ERMES/MDM complex, which serves as a molecular tether to connect the endoplasmic reticulum (ER) and mitochondria. Components of this complex are involved in the control of mitochondrial shape and protein biogenesis, and function in nonvesicular lipid trafficking between the ER and mitochondria. The mdm12-mmm1 subcomplex functions in the major beta-barrel assembly pathway that is responsible for biogenesis of all outer membrane beta-barrel proteins, and acts in a late step after the SAM complex. The mdm10-mdm12-mmm1 subcomplex further acts in the TOM40-specific pathway after the action of the mdm12-mmm1 complex. Essential for establishing and maintaining the structure of mitochondria and maintenance of mtDNA nucleoids. The sequence is that of Maintenance of mitochondrial morphology protein 1 from Schizosaccharomyces japonicus (strain yFS275 / FY16936) (Fission yeast).